We begin with the raw amino-acid sequence, 935 residues long: 2-oxoglutarate dehydrogenase E1 component (935 aa).

The protein belongs to the alpha-ketoglutarate dehydrogenase family. In terms of assembly, homodimer. Part of the 2-oxoglutarate dehydrogenase (OGDH) complex composed of E1 (2-oxoglutarate dehydrogenase), E2 (dihydrolipoamide succinyltransferase) and E3 (dihydrolipoamide dehydrogenase); the complex contains multiple copies of the three enzymatic components (E1, E2 and E3). It depends on thiamine diphosphate as a cofactor.

The enzyme catalyses N(6)-[(R)-lipoyl]-L-lysyl-[protein] + 2-oxoglutarate + H(+) = N(6)-[(R)-S(8)-succinyldihydrolipoyl]-L-lysyl-[protein] + CO2. Its function is as follows. E1 component of the 2-oxoglutarate dehydrogenase (OGDH) complex which catalyzes the decarboxylation of 2-oxoglutarate, the first step in the conversion of 2-oxoglutarate to succinyl-CoA and CO(2). In Haemophilus influenzae (strain ATCC 51907 / DSM 11121 / KW20 / Rd), this protein is 2-oxoglutarate dehydrogenase E1 component (sucA).